The primary structure comprises 1093 residues: TATA element modulatory factor (1093 aa).

2 disordered regions span residues 38 to 80 (WAET…SPKA) and 108 to 189 (TIQK…DMKV). Over residues 51–70 (SPVSGGWDTSTWGLKSNTEP) the composition is skewed to polar residues. 4 positions are modified to phosphoserine: Ser72, Ser77, Ser112, and Ser136. Over residues 123-137 (QRPEEEVKSSLHESL) the composition is skewed to basic and acidic residues. Positions 139 to 158 (IGQSRTPETTESQVKDSSLC) are enriched in polar residues. Basic and acidic residues predominate over residues 173 to 187 (TEGKHEETVNKESDM). Residues Ser199 and Ser217 each carry the phosphoserine modification. Residues 229–238 (PKEQKHEDRQ) are compositionally biased toward basic and acidic residues. Disordered regions lie at residues 229–260 (PKEQKHEDRQSNTPSPPVSTFSSGTSTTSDIE) and 266–285 (SVISESSASSRQETTDSKSS). The span at 246 to 257 (VSTFSSGTSTTS) shows a compositional bias: low complexity. Phosphoserine occurs at positions 328, 330, 333, 338, 344, 413, 542, 925, and 928. The tract at residues 333-342 (SLDSRSVSEI) is interaction with Elongin BC complex. The stretch at 439–922 (EALSEKEDVC…QETIKEKERK (484 aa)) forms a coiled coil. Residues 919-939 (KERKPFSVSSTPTMSRSSSIS) form a disordered region. Residues 925–939 (SVSSTPTMSRSSSIS) show a composition bias toward low complexity. Thr929 carries the post-translational modification Phosphothreonine. The residue at position 933 (Ser933) is a Phosphoserine. Residues 984–1092 (SIIENLQSQL…QIDELLRQSL (109 aa)) adopt a coiled-coil conformation.

As to quaternary structure, interacts with TRNP1; may regulate TRNP1 proteasomal degradation. Component of the SNF/SWI transcription factor complexes. Interacts with RAB6A. Interacts with STAT3 and FER. Interacts with TCEB1. Phosphorylated by FER.

Its subcellular location is the cytoplasm. It is found in the nucleus. It localises to the golgi apparatus membrane. Functionally, potential coactivator of the androgen receptor. Mediates STAT3 degradation. May play critical roles in two RAB6-dependent retrograde transport processes: one from endosomes to the Golgi and the other from the Golgi to the ER. This protein binds the HIV-1 TATA element and inhibits transcriptional activation by the TATA-binding protein (TBP). This Homo sapiens (Human) protein is TATA element modulatory factor (TMF1).